The sequence spans 572 residues: Proteinaceous RNase P 1, chloroplastic/mitochondrial (572 aa).

A chloroplast and mitochondrion-targeting transit peptide spans 1–70 (MLRLTCFTPS…SRHLCTLPLA (70 aa)). PPR repeat units follow at residues 96–130 (PEAL…GVQL), 136–174 (NVLL…KVVP), 175–209 (NEAT…GIQP), and 210–244 (RLRS…EVVP). One can recognise a PRORP domain in the interval 338–565 (MDENGVCKCC…DLQTSRQWLC (228 aa)). Zn(2+)-binding residues include Cys-344 and Cys-347. Positions 399, 474, 475, and 493 each coordinate Mn(2+). Positions 548 and 565 each coordinate Zn(2+).

Belongs to the PPR family. P subfamily. Mg(2+) serves as cofactor. Requires Mn(2+) as cofactor.

It is found in the mitochondrion. The protein localises to the plastid. It localises to the chloroplast. The enzyme catalyses Endonucleolytic cleavage of RNA, removing 5'-extranucleotides from tRNA precursor.. Functionally, endonuclease RNase P responsible for the 5' maturation of tRNA precursors. Preferentially cleaves at the unusual cleavage site, but also able to cleave at the classical cleavage site. Also involved in the maturation of mRNAs in mitochondria. The polypeptide is Proteinaceous RNase P 1, chloroplastic/mitochondrial (PRORP1) (Arabidopsis thaliana (Mouse-ear cress)).